Reading from the N-terminus, the 540-residue chain is Chaperonin GroEL (540 aa).

Residues Thr-29 to Pro-32, Asp-86 to Thr-90, Gly-413, Asn-476 to Ala-478, and Asp-492 each bind ATP.

The protein belongs to the chaperonin (HSP60) family. Forms a cylinder of 14 subunits composed of two heptameric rings stacked back-to-back. Interacts with the co-chaperonin GroES.

It is found in the cytoplasm. The enzyme catalyses ATP + H2O + a folded polypeptide = ADP + phosphate + an unfolded polypeptide.. Functionally, together with its co-chaperonin GroES, plays an essential role in assisting protein folding. The GroEL-GroES system forms a nano-cage that allows encapsulation of the non-native substrate proteins and provides a physical environment optimized to promote and accelerate protein folding. This chain is Chaperonin GroEL, found in Streptococcus agalactiae serotype V (strain ATCC BAA-611 / 2603 V/R).